Reading from the N-terminus, the 204-residue chain is Inner membrane protein YagU (204 aa).

Residues 1 to 14 (MNIFEQTPPNRRRY) lie on the Periplasmic side of the membrane. The helical transmembrane segment at 15-35 (GLAAFIGLIAGVVSAFVKWGA) threads the bilayer. Over 36-100 (EVPLPPRSPV…VYTFAGHVFN (65 aa)) the chain is Cytoplasmic. The helical transmembrane segment at 101–121 (WVGVTHIIFSIVFAVGYCVVA) threads the bilayer. Residues 122-132 (EVFPKIKLWQG) lie on the Periplasmic side of the membrane. A helical membrane pass occupies residues 133-153 (LLAGALAQLFVHMISFPLMGL). The Cytoplasmic segment spans residues 154–204 (TPPLFDLPWYENVSEIFGHLVWFWSIEIIRRDLRNRITHEPDPEIPLGSNR).

In terms of assembly, homodimer.

It localises to the cell inner membrane. This is Inner membrane protein YagU (yagU) from Escherichia coli (strain K12).